Consider the following 246-residue polypeptide: Ribonuclease PH (246 aa).

Residues R86 and 124–126 (GTR) contribute to the phosphate site.

Belongs to the RNase PH family. In terms of assembly, homohexameric ring arranged as a trimer of dimers.

The enzyme catalyses tRNA(n+1) + phosphate = tRNA(n) + a ribonucleoside 5'-diphosphate. Phosphorolytic 3'-5' exoribonuclease that plays an important role in tRNA 3'-end maturation. Removes nucleotide residues following the 3'-CCA terminus of tRNAs; can also add nucleotides to the ends of RNA molecules by using nucleoside diphosphates as substrates, but this may not be physiologically important. Probably plays a role in initiation of 16S rRNA degradation (leading to ribosome degradation) during starvation. This Bacillus licheniformis (strain ATCC 14580 / DSM 13 / JCM 2505 / CCUG 7422 / NBRC 12200 / NCIMB 9375 / NCTC 10341 / NRRL NRS-1264 / Gibson 46) protein is Ribonuclease PH.